We begin with the raw amino-acid sequence, 1133 residues long: Lysylphosphatidylglycerol biosynthesis bifunctional protein LysX (1133 aa).

The tract at residues 1–626 (MTTVDASPGI…LLHHDGSTPD (626 aa)) is phosphatidylglycerol lysyltransferase. Helical transmembrane passes span 43 to 63 (VPAAAGWTVGVIATLSLIASV), 82 to 102 (LFNFPDTSIAWSFVLALLAAA), 109 to 129 (IAWLLLLGNMVLAAVLNAVDM), 140 to 160 (FGENLGFAVHVVAILLLVLSY), 177 to 197 (AVLVAGDVIGILLSLGLVELF), 233 to 253 (LNAIFGLFGALALIMATIVLF), and 575 to 595 (LIPRVGVASVIAEGFLVLPFS). The lysine--tRNA ligase stretch occupies residues 627–1133 (VSGLQTADVD…TLPFPLAKPH (507 aa)). Residues Asp-1045 and Glu-1052 each coordinate Mg(2+).

The protein in the N-terminal section; belongs to the LPG synthetase family. It in the C-terminal section; belongs to the class-II aminoacyl-tRNA synthetase family. Requires Mg(2+) as cofactor.

It is found in the cell membrane. The catalysed reaction is tRNA(Lys) + L-lysine + ATP = L-lysyl-tRNA(Lys) + AMP + diphosphate. It carries out the reaction L-lysyl-tRNA(Lys) + a 1,2-diacyl-sn-glycero-3-phospho-(1'-sn-glycerol) = a 1,2-diacyl-sn-glycero-3-phospho-1'-(3'-O-L-lysyl)-sn-glycerol + tRNA(Lys). Its function is as follows. Catalyzes the production of L-lysyl-tRNA(Lys)transfer and the transfer of a lysyl group from L-lysyl-tRNA(Lys) to membrane-bound phosphatidylglycerol (PG), which produces lysylphosphatidylglycerol (LPG), one of the components of the bacterial membrane with a positive net charge. LPG synthesis contributes to the resistance to cationic antimicrobial peptides (CAMPs) and likely protects M.tuberculosis against the CAMPs produced by competiting microorganisms (bacteriocins). In fact, the modification of anionic phosphatidylglycerol with positively charged L-lysine results in repulsion of the peptides. In Mycobacterium leprae (strain Br4923), this protein is Lysylphosphatidylglycerol biosynthesis bifunctional protein LysX (lysX).